The chain runs to 326 residues: Protein farnesyltransferase/geranylgeranyltransferase type-1 subunit alpha (326 aa).

PFTA repeat units lie at residues Arg55–His89, Asp90–Pro124, Val126–Gly160, Trp161–Leu194, and Met201–Glu235.

This sequence belongs to the protein prenyltransferase subunit alpha family. Heterodimer of an alpha and a beta subunit. Mg(2+) serves as cofactor.

It carries out the reaction L-cysteinyl-[protein] + (2E,6E)-farnesyl diphosphate = S-(2E,6E)-farnesyl-L-cysteinyl-[protein] + diphosphate. The catalysed reaction is geranylgeranyl diphosphate + L-cysteinyl-[protein] = S-geranylgeranyl-L-cysteinyl-[protein] + diphosphate. Functionally, essential subunit of both the farnesyltransferase and the geranylgeranyltransferase complex. Contributes to the transfer of a farnesyl or geranylgeranyl moiety from farnesyl or geranylgeranyl diphosphate to a cysteine at the fourth position from the C-terminus of several proteins having the C-terminal sequence Cys-aliphatic-aliphatic-X. The polypeptide is Protein farnesyltransferase/geranylgeranyltransferase type-1 subunit alpha (FTA) (Arabidopsis thaliana (Mouse-ear cress)).